A 466-amino-acid polypeptide reads, in one-letter code: Alpha-1A adrenergic receptor (466 aa).

At 1–27 (MVFLSGNASDSSNCTQPPAPVNISKAI) the chain is on the extracellular side. N-linked (GlcNAc...) asparagine glycosylation is found at Asn7, Asn13, and Asn22. Residues 28–51 (LLGVILGGLILFGVLGNILVILSV) traverse the membrane as a helical segment. At 52–64 (ACHRHLHSVTHYY) the chain is on the cytoplasmic side. The chain crosses the membrane as a helical span at residues 65-88 (IVNLAVADLLLTSTVLPFSAIFEV). Topologically, residues 89–99 (LGYWAFGRVFC) are extracellular. Residues Cys99 and Cys176 are joined by a disulfide bond. The chain crosses the membrane as a helical span at residues 100–122 (NIWAAVDVLCCTASIMGLCIISI). Topologically, residues 123–143 (DRYIGVSYPLRYPTIVTQRRG) are cytoplasmic. The helical transmembrane segment at 144–167 (LMALLCVWALSLVISIGPLFGWRQ) threads the bilayer. The Extracellular portion of the chain corresponds to 168–181 (PAPEDETICQINEE). A helical transmembrane segment spans residues 182 to 205 (PGYVLFSALGSFYLPLAIILVMYC). The Cytoplasmic segment spans residues 206-273 (RVYVVAKRES…FSREKKAAKT (68 aa)). Ser215 is subject to Phosphoserine; by PKA. A helical membrane pass occupies residues 274–297 (LGIVVGCFVLCWLPFFLVMPIGSF). Residues 298-305 (FPDFKPSE) are Extracellular-facing. Residues 306-329 (TVFKIVFWLGYLNSCINPIIYPCS) traverse the membrane as a helical segment. Topologically, residues 330–466 (SQEFKKAFQN…ISLSENGEEV (137 aa)) are cytoplasmic. The Nuclear localization signal signature appears at 334–349 (KKAFQNVLRIQCLCRK). Cys345 carries S-palmitoyl cysteine lipidation.

The protein belongs to the G-protein coupled receptor 1 family. Adrenergic receptor subfamily. ADRA1A sub-subfamily. In terms of assembly, homo- and heterooligomer. Heterooligomerizes with ADRA1B homooligomers in cardiac myocytes. Interacts with CAVIN4. Post-translationally, C-terminal Ser or Thr residues may be phosphorylated. Expressed in heart, brain, liver and prostate, but not in kidney, lung, adrenal, aorta and pituitary. Within the prostate, expressed in the apex, base, periurethral and lateral lobe. Isoform 4 is the most abundant isoform expressed in the prostate with high levels also detected in liver and heart.

It is found in the nucleus membrane. The protein localises to the cell membrane. The protein resides in the cytoplasm. It localises to the membrane. Its subcellular location is the caveola. This alpha-adrenergic receptor mediates its action by association with G proteins that activate a phosphatidylinositol-calcium second messenger system. Its effect is mediated by G(q) and G(11) proteins. Nuclear ADRA1A-ADRA1B heterooligomers regulate phenylephrine(PE)-stimulated ERK signaling in cardiac myocytes. The chain is Alpha-1A adrenergic receptor (ADRA1A) from Homo sapiens (Human).